Consider the following 376-residue polypeptide: RING-H2 finger protein ATL46 (376 aa).

The helical transmembrane segment at 45-65 (VLFVIVILAVLFFISGLLHLL) threads the bilayer. The RING-type; atypical zinc finger occupies 143-185 (CAVCLCEFSEKDKLRLLPMCSHAFHLNCIDTWLQSNSTCPLCR). Basic and acidic residues-rich tracts occupy residues 296-305 (RLKPQDKESE) and 358-376 (DLPKLPWMEEHKKLENDGR). Disordered stretches follow at residues 296–320 (RLKPQDKESEQTGNSSSEDNKKINT) and 341–376 (FSSDAQRRLPSSSLNVDDLPKLPWMEEHKKLENDGR).

The protein belongs to the RING-type zinc finger family. ATL subfamily.

The protein localises to the membrane. The catalysed reaction is S-ubiquitinyl-[E2 ubiquitin-conjugating enzyme]-L-cysteine + [acceptor protein]-L-lysine = [E2 ubiquitin-conjugating enzyme]-L-cysteine + N(6)-ubiquitinyl-[acceptor protein]-L-lysine.. Its pathway is protein modification; protein ubiquitination. This chain is RING-H2 finger protein ATL46 (ATL46), found in Arabidopsis thaliana (Mouse-ear cress).